The chain runs to 191 residues: Peptidyl-tRNA hydrolase (191 aa).

Tyr-14 lines the tRNA pocket. Residue His-19 is the Proton acceptor of the active site. TRNA-binding residues include Tyr-64, Asn-66, and Asn-112.

It belongs to the PTH family. In terms of assembly, monomer.

It localises to the cytoplasm. It carries out the reaction an N-acyl-L-alpha-aminoacyl-tRNA + H2O = an N-acyl-L-amino acid + a tRNA + H(+). Hydrolyzes ribosome-free peptidyl-tRNAs (with 1 or more amino acids incorporated), which drop off the ribosome during protein synthesis, or as a result of ribosome stalling. Functionally, catalyzes the release of premature peptidyl moieties from peptidyl-tRNA molecules trapped in stalled 50S ribosomal subunits, and thus maintains levels of free tRNAs and 50S ribosomes. This is Peptidyl-tRNA hydrolase from Clostridium beijerinckii (strain ATCC 51743 / NCIMB 8052) (Clostridium acetobutylicum).